Consider the following 551-residue polypeptide: Podocalyxin (551 aa).

The first 21 residues, 1–21, serve as a signal peptide directing secretion; sequence MRSALALAALLLLLLSPPSLS. The disordered stretch occupies residues 18 to 324; the sequence is PSLSQEKSPQ…QRVSCGPPER (307 aa). The Extracellular segment spans residues 22-452; that stretch reads QEKSPQPGPT…PPEETEDRFS (431 aa). A compositionally biased stretch (low complexity) spans 32–59; it reads PMATSTSTRPAPASAPAPKSSVAASVPA. Residues 60-90 are compositionally biased toward polar residues; sequence EQNTTPMTTKAPATQSPSASPGSSVENSAPA. The segment covering 91-104 has biased composition (low complexity); the sequence is QGSTTTQQSLSVTT. Polar residues predominate over residues 142 to 164; it reads APSNHSITTKPLATEATSQAPRQ. N-linked (GlcNAc...) asparagine glycans are attached at residues N145 and N180. Residues 234–244 are compositionally biased toward polar residues; it reads PVASSAETQGM. A compositionally biased stretch (low complexity) spans 289–300; the sequence is TSSSTELASTAL. N333 carries N-linked (GlcNAc...) asparagine glycosylation. Residues 453 to 473 traverse the membrane as a helical segment; sequence LPLIITIVCMASFLLLVAALY. The Cytoplasmic portion of the chain corresponds to 474-551; it reads GCCHQRLSHR…DLDEEEDTHL (78 aa). Position 511 is a phosphothreonine (T511). S530 carries the phosphoserine modification. The residue at position 549 (T549) is a Phosphothreonine.

It belongs to the podocalyxin family. In terms of assembly, monomer; when associated with the membrane raft. Oligomer; when integrated in the apical membrane. Found in a complex with EZR, PODXL and NHERF2. Associates with the actin cytoskeleton through complex formation with EZR and NHERF2. Interacts (via the C-terminal PDZ-binding motif DTHL) with NHERF1 (via the PDZ domains); interaction is not detected in glomerular epithelium cells, take place early in the secretory pathway and is necessary for its apical membrane sorting. Interacts (via the C-terminal PDZ-binding motif DTHL) with NHERF2 (via the PDZ 1 domain); interaction is detected in glomerular epithelium cells. Interacts with EZR. N- and O-linked glycosylated. Sialoglycoprotein. Glomerular epithelium cell (podocyte) and endothelial cells.

It localises to the apical cell membrane. The protein localises to the cell projection. Its subcellular location is the microvillus. It is found in the membrane raft. The protein resides in the lamellipodium. It localises to the filopodium. The protein localises to the ruffle. Its subcellular location is the membrane. In terms of biological role, involved in the regulation of both adhesion and cell morphology and cancer progression. Functions as an anti-adhesive molecule that maintains an open filtration pathway between neighboring foot processes in the podocyte by charge repulsion. Acts as a pro-adhesive molecule, enhancing the adherence of cells to immobilized ligands, increasing the rate of migration and cell-cell contacts in an integrin-dependent manner. Induces the formation of apical actin-dependent microvilli. Involved in the formation of a preapical plasma membrane subdomain to set up initial epithelial polarization and the apical lumen formation during renal tubulogenesis. Plays a role in cancer development and aggressiveness by inducing cell migration and invasion through its interaction with the actin-binding protein EZR. Affects EZR-dependent signaling events, leading to increased activities of the MAPK and PI3K pathways in cancer cells. The chain is Podocalyxin (PODXL) from Oryctolagus cuniculus (Rabbit).